Consider the following 315-residue polypeptide: Small ribosomal subunit protein uS3 (315 aa).

Residues 38–106 (IRKMMSRGME…QVQLNILEVK (69 aa)) form the KH type-2 domain. The segment at 211–315 (AEREAQEALQ…VANTPEKAEE (105 aa)) is disordered. Basic residues predominate over residues 222 to 232 (QTRRERPRRGP). Residues 265–315 (APAETPAGEAAATEPTAPVAEPATAAASAPAEAASAPAEAAVANTPEKAEE) are compositionally biased toward low complexity.

This sequence belongs to the universal ribosomal protein uS3 family. As to quaternary structure, part of the 30S ribosomal subunit. Forms a tight complex with proteins S10 and S14.

Binds the lower part of the 30S subunit head. Binds mRNA in the 70S ribosome, positioning it for translation. The chain is Small ribosomal subunit protein uS3 from Frankia casuarinae (strain DSM 45818 / CECT 9043 / HFP020203 / CcI3).